The primary structure comprises 285 residues: NAD kinase (285 aa).

D68 serves as the catalytic Proton acceptor. NAD(+)-binding positions include 68-69 (DG), 142-143 (ND), R153, R170, D172, and Q242.

It belongs to the NAD kinase family. The cofactor is a divalent metal cation.

Its subcellular location is the cytoplasm. It carries out the reaction NAD(+) + ATP = ADP + NADP(+) + H(+). In terms of biological role, involved in the regulation of the intracellular balance of NAD and NADP, and is a key enzyme in the biosynthesis of NADP. Catalyzes specifically the phosphorylation on 2'-hydroxyl of the adenosine moiety of NAD to yield NADP. In Acidobacterium capsulatum (strain ATCC 51196 / DSM 11244 / BCRC 80197 / JCM 7670 / NBRC 15755 / NCIMB 13165 / 161), this protein is NAD kinase.